The sequence spans 371 residues: Homeobox protein Nkx-2.1 (371 aa).

The homeobox DNA-binding region spans Arg-161–Ala-220. Disordered regions lie at residues Gln-219–Ala-294 and Gly-310–Ala-339. The span at Ser-233–Gly-243 shows a compositional bias: gly residues. Residues Cys-244–Gln-253 are compositionally biased toward low complexity. Ser-254 is subject to Phosphoserine. The span at Ala-272–Ala-294 shows a compositional bias: low complexity.

The protein belongs to the NK-2 homeobox family. As to quaternary structure, interacts with WWTR1. In terms of processing, phosphorylated on serine residues by STK3/MST2. As to expression, thyroid and lung.

The protein resides in the nucleus. Its function is as follows. Transcription factor that binds and activates the promoter of thyroid specific genes such as thyroglobulin, thyroperoxidase, and thyrotropin receptor. Crucial in the maintenance of the thyroid differentiation phenotype. May play a role in lung development and surfactant homeostasis. Forms a regulatory loop with GRHL2 that coordinates lung epithelial cell morphogenesis and differentiation. Activates the transcription of GNRHR and plays a role in enhancing the circadian oscillation of its gene expression. Represses the transcription of the circadian transcriptional repressor NR1D1. This Homo sapiens (Human) protein is Homeobox protein Nkx-2.1.